The sequence spans 347 residues: Protein RecA (347 aa).

Residue 67 to 74 (GPESSGKT) coordinates ATP. The disordered stretch occupies residues 327–347 (ALGLSSPTPKENGKEKGKAKP). Positions 337–347 (ENGKEKGKAKP) are enriched in basic and acidic residues.

Belongs to the RecA family.

The protein resides in the cytoplasm. Can catalyze the hydrolysis of ATP in the presence of single-stranded DNA, the ATP-dependent uptake of single-stranded DNA by duplex DNA, and the ATP-dependent hybridization of homologous single-stranded DNAs. It interacts with LexA causing its activation and leading to its autocatalytic cleavage. The sequence is that of Protein RecA from Desulforapulum autotrophicum (strain ATCC 43914 / DSM 3382 / VKM B-1955 / HRM2) (Desulfobacterium autotrophicum).